Reading from the N-terminus, the 76-residue chain is UPF0154 protein Exig_1099 (76 aa).

The chain crosses the membrane as a helical span at residues 4–24; the sequence is WIWILIALLCLVAGVALGFYI. The tract at residues 54–76 is disordered; it reads KPSQKKVNQVMRSMSGSMKSPKK.

The protein belongs to the UPF0154 family.

Its subcellular location is the cell membrane. In Exiguobacterium sibiricum (strain DSM 17290 / CCUG 55495 / CIP 109462 / JCM 13490 / 255-15), this protein is UPF0154 protein Exig_1099.